The sequence spans 425 residues: G protein-activated inward rectifier potassium channel 2 (425 aa).

At 1–91 the chain is on the cytoplasmic side; that stretch reads MTMAKLTESM…IFTTLVDLKW (91 aa). 2 positions are modified to phosphoserine: Ser-18 and Ser-25. The helical transmembrane segment at 92–116 threads the bilayer; sequence RFNLLIFVMVYTVTWLFFGMIWWLI. The Extracellular portion of the chain corresponds to 117 to 140; the sequence is AYIRGDMDHIEDPSWTPCVTNLNG. The helical; Pore-forming intramembrane region spans 141–152; sequence FVSAFLFSIETE. Residues 153–159 constitute an intramembrane region (pore-forming); it reads TTIGYGY. The Selectivity filter motif lies at 154-159; the sequence is TIGYGY. Over 160-168 the chain is Extracellular; it reads RVITDKCPE. Residues 169 to 190 traverse the membrane as a helical segment; it reads GIILLLIQSVLGSIVNAFMVGC. Residues 191 to 425 lie on the Cytoplasmic side of the membrane; it reads MFVKISQPKK…VANLENESKV (235 aa). Residues 392 to 425 form a disordered region; the sequence is NQHAELETEEEEKNPEELTERNGDVANLENESKV. Positions 422 to 425 match the PDZ-binding motif; that stretch reads ESKV.

It belongs to the inward rectifier-type potassium channel (TC 1.A.2.1) family. KCNJ6 subfamily. In terms of assembly, associates with KCNJ3/GIRK1 or KCNJ5/GRIK4 to form a G-protein-activated heteromultimer pore-forming unit. The resulting inward current is much larger. Interacts (via PDZ-binding motif) with SNX27 (via PDZ domain); the interaction is required for recycling to the plasma membrane when endocytosed and prevent degradation in lysosomes. In terms of tissue distribution, pancreatic beta cells and brain.

It localises to the membrane. It catalyses the reaction K(+)(in) = K(+)(out). Activated by phosphatidylinositol 4,5 biphosphate (PtdIns(4,5)P2). In terms of biological role, inward rectifier potassium channels are characterized by a greater tendency to allow potassium to flow into the cell rather than out of it. Their voltage dependence is regulated by the concentration of extracellular potassium; as external potassium is raised, the voltage range of the channel opening shifts to more positive voltages. The inward rectification is mainly due to the blockage of outward current by internal magnesium. This potassium channel may be involved in the regulation of insulin secretion by glucose and/or neurotransmitters acting through G-protein-coupled receptors. The polypeptide is G protein-activated inward rectifier potassium channel 2 (Kcnj6) (Rattus norvegicus (Rat)).